The sequence spans 75 residues: Tautomerase PptA (75 aa).

Pro-2 functions as the Proton acceptor; via imino nitrogen in the catalytic mechanism.

The protein belongs to the 4-oxalocrotonate tautomerase family. PptA subfamily. Homodimer.

Its subcellular location is the cytoplasm. This chain is Tautomerase PptA, found in Shigella sonnei (strain Ss046).